We begin with the raw amino-acid sequence, 112 residues long: MTKRVLFELFVEEKNVGKAINIMTLAGITGFFLHKYRGLSPDKFKNLSKEELEDIEKVYEIIRDESDKAVVIGTVVKEEKAKKIEELLKEKMNNERWTVMKIPILKVKVHRV.

The protein to M.jannaschii MJ1244 and M.thermoautotrophicum MTH1110.

This is an uncharacterized protein from Methanocaldococcus jannaschii (strain ATCC 43067 / DSM 2661 / JAL-1 / JCM 10045 / NBRC 100440) (Methanococcus jannaschii).